The chain runs to 399 residues: Probable sugar efflux transporter (399 aa).

12 helical membrane passes run 15 to 35 (VVTL…PVGL), 50 to 70 (VGMM…PFML), 81 to 101 (LIGL…AWSF), 103 to 123 (VLVI…SITS), 136 to 156 (AQAL…GIPI), 168 to 188 (MTFL…VKLL), 209 to 229 (PALV…YTAY), 246 to 266 (FATV…ILFG), 273 to 293 (ASGL…LLLP), 301 to 321 (LMLL…GMQV), 333 to 353 (VAMS…ALVG), and 364 to 384 (SIGY…LMIF).

This sequence belongs to the major facilitator superfamily. SotB (TC 2.A.1.2) family.

The protein resides in the cell inner membrane. Involved in the efflux of sugars. The physiological role may be the reduction of the intracellular concentration of toxic sugars or sugar metabolites. This Klebsiella pneumoniae (strain 342) protein is Probable sugar efflux transporter.